A 434-amino-acid chain; its full sequence is DENN domain-containing protein 11 (434 aa).

The disordered stretch occupies residues 1–29 (MARRTDRAPLLDWAEGPGVSPAPETEQGE). Positions 1 to 168 (MARRTDRAPL…QLEIPGHYTP (168 aa)) constitute a uDENN domain. The 148-residue stretch at 194–341 (LPPVHKHLYP…VNSADKEKYQ (148 aa)) folds into the cDENN domain. The dDENN domain occupies 343-434 (LNDQRQLLMY…MLVIDNPCCP (92 aa)).

It belongs to the DENND11 family.

Probable guanine nucleotide exchange factor (GEF). May promote the exchange of GDP to GTP, converting inactive GDP-bound small GTPases into their active GTP-bound form. This chain is DENN domain-containing protein 11 (dennd11), found in Xenopus laevis (African clawed frog).